The chain runs to 129 residues: Small ribosomal subunit protein uS11 (129 aa).

It belongs to the universal ribosomal protein uS11 family. Part of the 30S ribosomal subunit. Interacts with proteins S7 and S18. Binds to IF-3.

Its function is as follows. Located on the platform of the 30S subunit, it bridges several disparate RNA helices of the 16S rRNA. Forms part of the Shine-Dalgarno cleft in the 70S ribosome. In Aliivibrio fischeri (strain ATCC 700601 / ES114) (Vibrio fischeri), this protein is Small ribosomal subunit protein uS11.